The sequence spans 473 residues: Ammonium transporter Rh type C (473 aa).

Residues Met-1–Trp-9 are Cytoplasmic-facing. Residues Arg-10–Val-30 form a helical membrane-spanning segment. The Extracellular portion of the chain corresponds to Arg-31–Tyr-61. An N-linked (GlcNAc...) asparagine glycan is attached at Asn-48. The chain crosses the membrane as a helical span at residues Pro-62 to Leu-82. Residues Gln-83 to Gly-86 are Cytoplasmic-facing. A helical membrane pass occupies residues Phe-87–Met-107. Over Gln-108 to Ser-125 the chain is Extracellular. A helical transmembrane segment spans residues Leu-126–Gly-145. Residues Lys-146–Gln-151 lie on the Cytoplasmic side of the membrane. A helical transmembrane segment spans residues Ile-152–Leu-171. Residues Asn-172–Ala-179 are Extracellular-facing. A helical membrane pass occupies residues Gly-180–Leu-200. Residues Ser-201 to Asp-219 are Cytoplasmic-facing. The helical transmembrane segment at Leu-220–Ile-240 threads the bilayer. Over Ser-241–Ala-251 the chain is Extracellular. The chain crosses the membrane as a helical span at residues Ile-252–Val-272. Residues Asn-273–Asn-285 are Cytoplasmic-facing. Residues Ala-286 to Gly-306 form a helical membrane-spanning segment. A topological domain (extracellular) is located at residue Ser-307. Residues Leu-308 to Ile-328 traverse the membrane as a helical segment. Residues Leu-329–Asn-343 lie on the Cytoplasmic side of the membrane. Residues Leu-344 to Thr-364 form a helical membrane-spanning segment. At Glu-365–Ala-396 the chain is on the extracellular side. A helical transmembrane segment spans residues Ala-397–Leu-417. The Cytoplasmic segment spans residues Lys-418–Lys-473.

It belongs to the ammonium transporter (TC 2.A.49) family. Rh subfamily. Homotrimer.

It is found in the apical cell membrane. In terms of biological role, functions as an ammonia transporter. This is Ammonium transporter Rh type C (rhcg) from Xenopus laevis (African clawed frog).